We begin with the raw amino-acid sequence, 600 residues long: DNA ligase (600 aa).

Asp-258 lines the ATP pocket. The active-site N6-AMP-lysine intermediate is the Lys-260. Positions 265, 280, 310, 350, 427, and 433 each coordinate ATP.

The protein belongs to the ATP-dependent DNA ligase family. Mg(2+) is required as a cofactor.

The enzyme catalyses ATP + (deoxyribonucleotide)n-3'-hydroxyl + 5'-phospho-(deoxyribonucleotide)m = (deoxyribonucleotide)n+m + AMP + diphosphate.. Inhibited by PCNA123 and PCNA323. DNA ligase that seals nicks in double-stranded DNA during DNA replication, DNA recombination and DNA repair. The sequence is that of DNA ligase from Sulfurisphaera tokodaii (strain DSM 16993 / JCM 10545 / NBRC 100140 / 7) (Sulfolobus tokodaii).